Here is a 402-residue protein sequence, read N- to C-terminus: Endo-polygalacturonase (402 aa).

Positions 1 to 23 (MEYQSGKRVLSLSLGLIGLFSAS) are cleaved as a signal peptide. Asp249 serves as the catalytic Proton donor. His277 is an active-site residue.

This sequence belongs to the glycosyl hydrolase 28 family. Monomer.

The protein localises to the secreted. It catalyses the reaction (1,4-alpha-D-galacturonosyl)n+m + H2O = (1,4-alpha-D-galacturonosyl)n + (1,4-alpha-D-galacturonosyl)m.. Its function is as follows. Involved in maceration and soft-rotting of plant tissue. This chain is Endo-polygalacturonase (peh), found in Pectobacterium carotovorum subsp. carotovorum (Erwinia carotovora subsp. carotovora).